The chain runs to 88 residues: EKC/KEOPS complex subunit SPAC4H3.13 (88 aa).

It belongs to the CTAG/PCC1 family. Component of the EKC/KEOPS complex composed of at least of SPAP27G11.07c/BUD32, cgi121, gon7, pgp2 and SPAC4H3.13/PCC1; the whole complex dimerizes.

The protein resides in the cytoplasm. The protein localises to the nucleus. Its subcellular location is the chromosome. It is found in the telomere. Its function is as follows. Component of the EKC/KEOPS complex that is required for the formation of a threonylcarbamoyl group on adenosine at position 37 (t(6)A37) in tRNAs that read codons beginning with adenine. The complex is probably involved in the transfer of the threonylcarbamoyl moiety of threonylcarbamoyl-AMP (TC-AMP) to the N6 group of A37. SPAC4H3.13/PCC1 functions as a dimerization module for the complex. The EKC/KEOPS complex also promotes both telomere uncapping and telomere elongation. The complex is required for efficient recruitment of transcriptional coactivators. The protein is EKC/KEOPS complex subunit SPAC4H3.13 of Schizosaccharomyces pombe (strain 972 / ATCC 24843) (Fission yeast).